A 1889-amino-acid chain; its full sequence is E3 ubiquitin-protein ligase UBR3 (1889 aa).

Positions Met1–Leu27 are disordered. A UBR-type zinc finger spans residues Ala118 to Ile189. The disordered stretch occupies residues Leu338–Lys362. Ser343 and Ser344 each carry phosphoserine. 2 consecutive transmembrane segments (helical) span residues Met761–Met781 and Leu919–Asp939. Residues Lys1167–Ser1199 are a coiled coil. Residue Ser1199 is modified to Phosphoserine. An RING-type; degenerate zinc finger spans residues Asp1306–Arg1364. The helical transmembrane segment at Gln1807–Ile1827 threads the bilayer.

This sequence belongs to the E3 ubiquitin-protein ligase UBR1-like family. Interacts with UBE2A and UBE2B. In terms of tissue distribution, expressed in numerous cells of the smell, touch, vision, hearing and taste senses. Expressed in cells of the olfactory pathway, including the olfactory cell layer of the main olfactory epithelium (MOE), a mitral neuron cell layer of the olfactory bulb (OB), and a pyramidal cell layer of the piriform cortex of the olfactory cortex (OC). Expressed in the vomeronasal sensory epithelium of the vomeronasal organ (VNO) and the mitral cells of the accessory olfactory bulb. Expressed in tactile tissues, including the dorsal root ganglion, trigeminal ganglion and follicle-sinus complexes. Expressed in cells between hair follicle and sinus and also in the region of the rete ridge collar. Expressed in taste buds of the fungiform, circumvallate, and foliate papillae. Expressed in the spiral ganglion, the organ of Corti of the cochlea in the inner ear, in the sensory epithelium of macula and vestibular ganglion of the balancing system (at protein level). Expressed in the liver and skeletal muscle.

The protein localises to the membrane. The enzyme catalyses S-ubiquitinyl-[E2 ubiquitin-conjugating enzyme]-L-cysteine + [acceptor protein]-L-lysine = [E2 ubiquitin-conjugating enzyme]-L-cysteine + N(6)-ubiquitinyl-[acceptor protein]-L-lysine.. It functions in the pathway protein modification; protein ubiquitination. Functionally, E3 ubiquitin-protein ligase which is a component of the N-end rule pathway. Does not bind to proteins bearing specific N-terminal residues that are destabilizing according to the N-end rule, leading to their ubiquitination and subsequent degradation. May play a role in Shh signaling by mediating the ubiquitination of Kif7. May be important for MYH9 function in certain tissues, possibly by regulating the ubiquitination of MYH9 and consequently affecting its interaction with MYO7A. This Mus musculus (Mouse) protein is E3 ubiquitin-protein ligase UBR3 (Ubr3).